The sequence spans 279 residues: Large ribosomal subunit protein uL2 (279 aa).

The segment at 222 to 279 is disordered; that stretch reads GMAMNPVDHPMGGGEGKSKSGGGRRHPKSPWGQLAKGLKTRNKKKASQKLIVRGRNAK. Over residues 232–242 the composition is skewed to gly residues; it reads MGGGEGKSKSG. The segment covering 259 to 268 has biased composition (basic residues); that stretch reads LKTRNKKKAS.

The protein belongs to the universal ribosomal protein uL2 family. In terms of assembly, part of the 50S ribosomal subunit. Forms a bridge to the 30S subunit in the 70S ribosome.

In terms of biological role, one of the primary rRNA binding proteins. Required for association of the 30S and 50S subunits to form the 70S ribosome, for tRNA binding and peptide bond formation. It has been suggested to have peptidyltransferase activity; this is somewhat controversial. Makes several contacts with the 16S rRNA in the 70S ribosome. This Chlorobium phaeobacteroides (strain DSM 266 / SMG 266 / 2430) protein is Large ribosomal subunit protein uL2.